We begin with the raw amino-acid sequence, 196 residues long: Segregation and condensation protein B (196 aa).

This sequence belongs to the ScpB family. In terms of assembly, homodimer. Homodimerization may be required to stabilize the binding of ScpA to the Smc head domains. Component of a cohesin-like complex composed of ScpA, ScpB and the Smc homodimer, in which ScpA and ScpB bind to the head domain of Smc. The presence of the three proteins is required for the association of the complex with DNA.

Its subcellular location is the cytoplasm. Participates in chromosomal partition during cell division. May act via the formation of a condensin-like complex containing Smc and ScpA that pull DNA away from mid-cell into both cell halves. The protein is Segregation and condensation protein B of Lactobacillus johnsonii (strain CNCM I-12250 / La1 / NCC 533).